Here is a 416-residue protein sequence, read N- to C-terminus: Homeobox protein ceh-62 (416 aa).

The span at 103-113 shows a compositional bias: low complexity; that stretch reads TPTPIIATPSI. 2 disordered regions span residues 103–144 and 178–247; these read TPTP…QATR and FQNR…FPPT. Residues 118-127 show a composition bias toward polar residues; the sequence is QPLQSPSAPN. The segment at residues 130–189 is a DNA-binding region (homeobox); sequence SRRKRTTFSPEQATRLEAEYIGDSYMAREKRHLLAQSLKLSENQVKTWFQNRRAKDKRDR. A compositionally biased stretch (low complexity) spans 193–218; it reads NASNHTSNSRRSSPSRKSSSDSTPTP. Over residues 219-240 the composition is skewed to polar residues; sequence TQATQFDMPTQIQTASPPTTAD.

The protein resides in the nucleus. This chain is Homeobox protein ceh-62, found in Caenorhabditis elegans.